The chain runs to 188 residues: Probable manganese efflux pump MntP (188 aa).

The next 5 helical transmembrane spans lie at 3–23 (ITAT…ASIG), 66–86 (LEWN…RMII), 106–128 (WLLV…GLAF), 143–163 (ATLI…SIIG), and 168–188 (ILGG…HFHG).

Belongs to the MntP (TC 9.B.29) family.

It is found in the cell inner membrane. Functionally, probably functions as a manganese efflux pump. The sequence is that of Probable manganese efflux pump MntP from Shigella flexneri serotype 5b (strain 8401).